A 208-amino-acid polypeptide reads, in one-letter code: Large ribosomal subunit protein uL4 (208 aa).

The segment at Q46–Y97 is disordered. The segment covering G69–S80 has biased composition (polar residues).

Belongs to the universal ribosomal protein uL4 family. Part of the 50S ribosomal subunit.

One of the primary rRNA binding proteins, this protein initially binds near the 5'-end of the 23S rRNA. It is important during the early stages of 50S assembly. It makes multiple contacts with different domains of the 23S rRNA in the assembled 50S subunit and ribosome. In terms of biological role, forms part of the polypeptide exit tunnel. The chain is Large ribosomal subunit protein uL4 from Chlorobaculum parvum (strain DSM 263 / NCIMB 8327) (Chlorobium vibrioforme subsp. thiosulfatophilum).